A 571-amino-acid polypeptide reads, in one-letter code: Isthmin-2 (571 aa).

Positions 1–26 are cleaved as a signal peptide; the sequence is MRALRDRAGLLLCVLLLAALLEAALG. 3 disordered regions span residues 30-60, 116-141, and 257-294; these read KKPRLRGPRPGSLTRLAEVSASPDPRPLKEE, ANTTLSTPNPDTQASASPDPRPLREE, and EKDRAPGEKGEEKEEDEDYPSEDIEGEDQEDKEEDEEE. The span at 116–131 shows a compositional bias: polar residues; it reads ANTTLSTPNPDTQASA. An N-linked (GlcNAc...) asparagine glycan is attached at Asn-117. Basic and acidic residues predominate over residues 257–268; sequence EKDRAPGEKGEE. Positions 269–294 are enriched in acidic residues; that stretch reads KEEDEDYPSEDIEGEDQEDKEEDEEE. An N-linked (GlcNAc...) asparagine glycan is attached at Asn-300. A TSP type-1 domain is found at 327–371; sequence EPQKEWSPWSPCSGNCSTGKQQRTRPCGYGCTATETRTCDLPSCP. Disulfide bonds link Cys-338–Cys-365, Cys-342–Cys-370, and Cys-353–Cys-357. Residue Asn-392 is glycosylated (N-linked (GlcNAc...) asparagine). Residues 396–559 form the AMOP domain; sequence MHDQDVDSCE…RACTDNPLEE (164 aa).

It belongs to the isthmin family. In terms of tissue distribution, expressed at high levels in the placenta and at moderate levels in the pancreas, kidney, heart, liver, lung, brain and skeletal muscle.

It is found in the secreted. This Homo sapiens (Human) protein is Isthmin-2 (ISM2).